Consider the following 227-residue polypeptide: Phosphatidylethanolamine-binding protein 4 (227 aa).

The signal sequence occupies residues 1–22 (MGWTMRLVTAALLLGLMMVVTG). Asn169 carries N-linked (GlcNAc...) (complex) asparagine glycosylation. Positions 188-227 (EPEASTQFMTQNYQDSPTLQAPRERASEPKHKNQAEIAAC) are important for secretion. The segment at 202–227 (DSPTLQAPRERASEPKHKNQAEIAAC) is disordered. Residues 209–221 (PRERASEPKHKNQ) are compositionally biased toward basic and acidic residues.

Belongs to the phosphatidylethanolamine-binding protein family.

It is found in the secreted. Its function is as follows. Promotes AKT phosphorylation, suggesting a possible role in the PI3K-AKT signaling pathway. This Homo sapiens (Human) protein is Phosphatidylethanolamine-binding protein 4 (PEBP4).